Here is a 375-residue protein sequence, read N- to C-terminus: Succinyl-diaminopimelate desuccinylase (375 aa).

His66 is a Zn(2+) binding site. Asp68 is a catalytic residue. A Zn(2+)-binding site is contributed by Asp99. The Proton acceptor role is filled by Glu133. Positions 134, 162, and 348 each coordinate Zn(2+).

Belongs to the peptidase M20A family. DapE subfamily. In terms of assembly, homodimer. The cofactor is Zn(2+). Requires Co(2+) as cofactor.

The catalysed reaction is N-succinyl-(2S,6S)-2,6-diaminopimelate + H2O = (2S,6S)-2,6-diaminopimelate + succinate. It participates in amino-acid biosynthesis; L-lysine biosynthesis via DAP pathway; LL-2,6-diaminopimelate from (S)-tetrahydrodipicolinate (succinylase route): step 3/3. In terms of biological role, catalyzes the hydrolysis of N-succinyl-L,L-diaminopimelic acid (SDAP), forming succinate and LL-2,6-diaminopimelate (DAP), an intermediate involved in the bacterial biosynthesis of lysine and meso-diaminopimelic acid, an essential component of bacterial cell walls. The polypeptide is Succinyl-diaminopimelate desuccinylase (Photorhabdus laumondii subsp. laumondii (strain DSM 15139 / CIP 105565 / TT01) (Photorhabdus luminescens subsp. laumondii)).